A 428-amino-acid chain; its full sequence is Tyrosine--tRNA ligase (428 aa).

Tyr41 provides a ligand contact to L-tyrosine. Positions 46 to 55 (PTADSLHLGH) match the 'HIGH' region motif. L-tyrosine contacts are provided by Tyr179 and Gln183. The short motif at 239–243 (KFGKT) is the 'KMSKS' region element. ATP is bound at residue Lys242. Positions 361–418 (TDLMQALVDAELQPSRGQARKTIASNAVTINGEKQSDPEYIFNDEDRLFGRYTLLRRG) constitute an S4 RNA-binding domain.

It belongs to the class-I aminoacyl-tRNA synthetase family. TyrS type 1 subfamily. Homodimer.

The protein localises to the cytoplasm. The enzyme catalyses tRNA(Tyr) + L-tyrosine + ATP = L-tyrosyl-tRNA(Tyr) + AMP + diphosphate + H(+). In terms of biological role, catalyzes the attachment of tyrosine to tRNA(Tyr) in a two-step reaction: tyrosine is first activated by ATP to form Tyr-AMP and then transferred to the acceptor end of tRNA(Tyr). In Salmonella arizonae (strain ATCC BAA-731 / CDC346-86 / RSK2980), this protein is Tyrosine--tRNA ligase.